The sequence spans 116 residues: Cuticle protein AM1274 (116 aa).

Q1 bears the Pyrrolidone carboxylic acid mark. The interval 1–22 (QLANEPPIEIIRQESTDNGDGN) is disordered. A Chitin-binding type R&amp;R domain is found at 20 to 85 (DGNFNFLFET…PVSDFIPTPH (66 aa)). The O-linked (HexNAc) threonine glycan is linked to T83.

Arthrodial membrane.

The sequence is that of Cuticle protein AM1274 from Cancer pagurus (Rock crab).